A 169-amino-acid polypeptide reads, in one-letter code: MQDVCNSQEILQDYAMELDRADVALLNAVQKNNRLTSEELADKVGLSPTACQRRLKRLRSLGVIEADVSIVSPKAVGRPVTMIVMVSLERERADIVDRFKSSIRNTREVMIGYYVTGDADFILIVTAKDMEEYEEFTRRFFYENHDIKGFKTMVVMDRVKATFAVPIEI.

Residues 18–79 form the HTH asnC-type domain; it reads LDRADVALLN…IVSPKAVGRP (62 aa). The segment at residues 37 to 56 is a DNA-binding region (H-T-H motif); that stretch reads SEELADKVGLSPTACQRRLK.

This is an uncharacterized protein from Sinorhizobium fredii (strain NBRC 101917 / NGR234).